Here is a 430-residue protein sequence, read N- to C-terminus: MFVDQVKISLKAGDGGNGITAYRREKYVPFGGPAGGDGGKGASVVFEVDEGLRTLLDFRYQRHFKAKKGENGQSSNMHGRNAEDLVLKVPPGTIIKSVESEEVLADLVEDGQRAIVARGGRGGRGNSRFATPRNPAPDFSENGEPGEELEVTLELKLLADVGLVGFPSVGKSTLLSIVSKAKPKIGAYHFTTIKPNLGVVSTPDHRSFVMADLPGLIEGASDGVGLGHQFLRHVERTKVIVHMIDMSGSEGRNPLDDYKIINQELINYKQRLEDRPQIIVANKMDLPDSQGNLSHFKEQLDNDVTVVPVSTITRDNIDQLLYQIADKLEEVKDVDFSVEEDENLGVNRVLYKHTPSADKFTISRDDDGAYVVSGNAIERMFKMTDFNSDPAVRRFARQMRSMGIDDALRERGCSNGDIVRILGGEFEFVE.

Positions 1 to 158 constitute an Obg domain; it reads MFVDQVKISL…LEVTLELKLL (158 aa). The tract at residues 118 to 145 is disordered; that stretch reads RGGRGGRGNSRFATPRNPAPDFSENGEP. Residues 159-329 form the OBG-type G domain; it reads ADVGLVGFPS…LLYQIADKLE (171 aa). Residues 165 to 172, 190 to 194, 212 to 215, 282 to 285, and 310 to 312 contribute to the GTP site; these read GFPSVGKS, FTTIK, DLPG, NKMD, and STI. Positions 172 and 192 each coordinate Mg(2+). The 79-residue stretch at 352–430 folds into the OCT domain; the sequence is KHTPSADKFT…ILGGEFEFVE (79 aa).

This sequence belongs to the TRAFAC class OBG-HflX-like GTPase superfamily. OBG GTPase family. As to quaternary structure, monomer. Mg(2+) serves as cofactor.

It localises to the cytoplasm. An essential GTPase which binds GTP, GDP and possibly (p)ppGpp with moderate affinity, with high nucleotide exchange rates and a fairly low GTP hydrolysis rate. Plays a role in control of the cell cycle, stress response, ribosome biogenesis and in those bacteria that undergo differentiation, in morphogenesis control. The chain is GTPase Obg from Staphylococcus epidermidis (strain ATCC 12228 / FDA PCI 1200).